The sequence spans 290 residues: 4-hydroxy-tetrahydrodipicolinate synthase (290 aa).

A pyruvate-binding site is contributed by T44. The active-site Proton donor/acceptor is Y132. Residue K160 is the Schiff-base intermediate with substrate of the active site. Position 202 (I202) interacts with pyruvate.

Belongs to the DapA family. In terms of assembly, homotetramer; dimer of dimers.

It is found in the cytoplasm. It catalyses the reaction L-aspartate 4-semialdehyde + pyruvate = (2S,4S)-4-hydroxy-2,3,4,5-tetrahydrodipicolinate + H2O + H(+). It functions in the pathway amino-acid biosynthesis; L-lysine biosynthesis via DAP pathway; (S)-tetrahydrodipicolinate from L-aspartate: step 3/4. Functionally, catalyzes the condensation of (S)-aspartate-beta-semialdehyde [(S)-ASA] and pyruvate to 4-hydroxy-tetrahydrodipicolinate (HTPA). This is 4-hydroxy-tetrahydrodipicolinate synthase from Cereibacter sphaeroides (strain ATCC 17025 / ATH 2.4.3) (Rhodobacter sphaeroides).